The chain runs to 230 residues: MLAKVEPKRQLARFRGRSYVAFVFAPVVPIADWLEEIDSTIERSSGFFVGRPVVLDLSAVDLSCSGITHLLSSLEARNIRVLGIEGVNGSQLTPSMPPLLTGGRHCVLEHIETDKAEAKPRASSLLLKQPVRSGQSVVFTEGDVTVLGSVGSGAEIVAGGSIHIYGTLRGRAMAGVNGNLDARIYCQKIEAELLAIDGYYQTAENIDSTLRSRPVQAWLDDETLKITPLI.

This sequence belongs to the MinC family. Interacts with MinD and FtsZ.

Cell division inhibitor that blocks the formation of polar Z ring septums. Rapidly oscillates between the poles of the cell to destabilize FtsZ filaments that have formed before they mature into polar Z rings. Prevents FtsZ polymerization. This is Probable septum site-determining protein MinC from Rhodopseudomonas palustris (strain BisA53).